The chain runs to 125 residues: Small ribosomal subunit protein uS13 (125 aa).

A disordered region spans residues 93 to 125 (RSLPVRGQRTRTNARTRKGKRKTVAGKKKAGKK).

The protein belongs to the universal ribosomal protein uS13 family. As to quaternary structure, part of the 30S ribosomal subunit. Forms a loose heterodimer with protein S19. Forms two bridges to the 50S subunit in the 70S ribosome.

Located at the top of the head of the 30S subunit, it contacts several helices of the 16S rRNA. In the 70S ribosome it contacts the 23S rRNA (bridge B1a) and protein L5 of the 50S subunit (bridge B1b), connecting the 2 subunits; these bridges are implicated in subunit movement. Contacts the tRNAs in the A and P-sites. The protein is Small ribosomal subunit protein uS13 of Chlorobaculum tepidum (strain ATCC 49652 / DSM 12025 / NBRC 103806 / TLS) (Chlorobium tepidum).